Here is a 306-residue protein sequence, read N- to C-terminus: Protein-L-isoaspartate O-methyltransferase 2 (306 aa).

A disordered region spans residues 1 to 82; it reads MSTTPPRNKF…ASAATAGGGG (82 aa). Residues 38 to 48 are compositionally biased toward pro residues; sequence PAAPTPAPAKP. The segment covering 54 to 77 has biased composition (low complexity); that stretch reads PRTAAPAPAPVPASAVEQRASAAT. Ser-142 is a catalytic residue.

Belongs to the methyltransferase superfamily. L-isoaspartyl/D-aspartyl protein methyltransferase family.

The protein localises to the cytoplasm. It catalyses the reaction [protein]-L-isoaspartate + S-adenosyl-L-methionine = [protein]-L-isoaspartate alpha-methyl ester + S-adenosyl-L-homocysteine. Catalyzes the methyl esterification of L-isoaspartyl residues in peptides and proteins that result from spontaneous decomposition of normal L-aspartyl and L-asparaginyl residues. It plays a role in the repair and/or degradation of damaged proteins. In Cupriavidus necator (strain ATCC 17699 / DSM 428 / KCTC 22496 / NCIMB 10442 / H16 / Stanier 337) (Ralstonia eutropha), this protein is Protein-L-isoaspartate O-methyltransferase 2.